The following is a 623-amino-acid chain: Kelch-like protein diablo (623 aa).

The segment at 1 to 54 (MGDLPGSGSTAQPRDAAVTGTGGNSTAGGGSSVGSTAVDRPPSPARLSHTSEKH) is disordered. At Thr-19 the chain carries Phosphothreonine. Positions 20 to 32 (GTGGNSTAGGGSS) are enriched in gly residues. One can recognise a BTB domain in the interval 72–139 (CDVVLNVGGR…CYTAHIIVEE (68 aa)). Residues 174–276 (CLGIRAFADT…SPKFLVGTVG (103 aa)) enclose the BACK domain. Kelch repeat units lie at residues 323-369 (VLFA…VLND), 371-417 (LYAV…VLDE), 418-464 (FLYA…VLGG), 466-511 (LYAI…VFNN), 513-558 (IYAV…VVNG), and 559-605 (QLYA…VMRA).

The protein operates within protein modification; protein ubiquitination. Its function is as follows. Probable substrate-specific adapter of an E3 ubiquitin-protein ligase complex which mediates the ubiquitination and subsequent proteasomal degradation of target proteins. May have a role in synapse differentiation and growth. In Drosophila simulans (Fruit fly), this protein is Kelch-like protein diablo.